A 235-amino-acid polypeptide reads, in one-letter code: Large ribosomal subunit protein uL4 (235 aa).

The tract at residues 45–75 (RAGTASTKTRGEVSGGGRKPWPQKHTGRARH) is disordered. Basic residues predominate over residues 65–75 (WPQKHTGRARH).

Belongs to the universal ribosomal protein uL4 family. In terms of assembly, part of the 50S ribosomal subunit.

In terms of biological role, one of the primary rRNA binding proteins, this protein initially binds near the 5'-end of the 23S rRNA. It is important during the early stages of 50S assembly. It makes multiple contacts with different domains of the 23S rRNA in the assembled 50S subunit and ribosome. Its function is as follows. This protein only weakly controls expression of the E.coli S10 operon. It is incorporated into E.coli ribosomes, however it is not as firmly associated as the endogenous protein. Forms part of the polypeptide exit tunnel. This chain is Large ribosomal subunit protein uL4 (rplD), found in Thermotoga maritima (strain ATCC 43589 / DSM 3109 / JCM 10099 / NBRC 100826 / MSB8).